Here is a 445-residue protein sequence, read N- to C-terminus: UDP-N-acetylmuramoylalanine--D-glutamate ligase (445 aa).

Residue 118–124 coordinates ATP; sequence GTNGKTT.

Belongs to the MurCDEF family.

It localises to the cytoplasm. The catalysed reaction is UDP-N-acetyl-alpha-D-muramoyl-L-alanine + D-glutamate + ATP = UDP-N-acetyl-alpha-D-muramoyl-L-alanyl-D-glutamate + ADP + phosphate + H(+). Its pathway is cell wall biogenesis; peptidoglycan biosynthesis. Cell wall formation. Catalyzes the addition of glutamate to the nucleotide precursor UDP-N-acetylmuramoyl-L-alanine (UMA). In Macrococcus caseolyticus (strain JCSC5402) (Macrococcoides caseolyticum), this protein is UDP-N-acetylmuramoylalanine--D-glutamate ligase.